Here is an 81-residue protein sequence, read N- to C-terminus: Cell division protein ZapB (81 aa).

Positions 5–81 (LEVFEKLESK…QALLGRMEEV (77 aa)) form a coiled coil. The interval 43-64 (VQSAQHGREELERENSQLKEQQ) is disordered. The segment covering 48–59 (HGREELERENSQ) has biased composition (basic and acidic residues).

This sequence belongs to the ZapB family. In terms of assembly, homodimer. The ends of the coiled-coil dimer bind to each other, forming polymers. Interacts with FtsZ.

The protein localises to the cytoplasm. Non-essential, abundant cell division factor that is required for proper Z-ring formation. It is recruited early to the divisome by direct interaction with FtsZ, stimulating Z-ring assembly and thereby promoting cell division earlier in the cell cycle. Its recruitment to the Z-ring requires functional FtsA or ZipA. This Klebsiella pneumoniae subsp. pneumoniae (strain ATCC 700721 / MGH 78578) protein is Cell division protein ZapB.